We begin with the raw amino-acid sequence, 130 residues long: Large ribosomal subunit protein bL12 (130 aa).

The protein belongs to the bacterial ribosomal protein bL12 family. In terms of assembly, homodimer. Part of the ribosomal stalk of the 50S ribosomal subunit. Forms a multimeric L10(L12)X complex, where L10 forms an elongated spine to which 2 to 4 L12 dimers bind in a sequential fashion. Binds GTP-bound translation factors.

Functionally, forms part of the ribosomal stalk which helps the ribosome interact with GTP-bound translation factors. Is thus essential for accurate translation. The protein is Large ribosomal subunit protein bL12 of Nostoc punctiforme (strain ATCC 29133 / PCC 73102).